Reading from the N-terminus, the 146-residue chain is Hemoglobin subunit beta-1 (146 aa).

In terms of domain architecture, Globin spans 2–146; sequence EWSSNERSTI…VISALSRQYF (145 aa). His63 and His92 together coordinate heme b.

The protein belongs to the globin family. In terms of assembly, heterotetramer of two alpha chains and two beta chains. As to expression, red blood cells.

Its function is as follows. Involved in oxygen transport from gills to the various peripheral tissues. This chain is Hemoglobin subunit beta-1 (hbb1), found in Muraena helena (Mediterranean moray).